The primary structure comprises 287 residues: Large ribosomal subunit protein uL2 (287 aa).

The disordered stretch occupies residues 216 to 287 (RRPEVRGSVM…SKRGRGGRDA (72 aa)). Residues 271-287 (QRRRRKSSKRGRGGRDA) show a composition bias toward basic residues.

It belongs to the universal ribosomal protein uL2 family. As to quaternary structure, part of the 50S ribosomal subunit. Forms a bridge to the 30S subunit in the 70S ribosome.

Functionally, one of the primary rRNA binding proteins. Required for association of the 30S and 50S subunits to form the 70S ribosome, for tRNA binding and peptide bond formation. It has been suggested to have peptidyltransferase activity; this is somewhat controversial. Makes several contacts with the 16S rRNA in the 70S ribosome. This chain is Large ribosomal subunit protein uL2, found in Synechococcus sp. (strain ATCC 27144 / PCC 6301 / SAUG 1402/1) (Anacystis nidulans).